The chain runs to 143 residues: Peptide methionine sulfoxide reductase B8 (143 aa).

Positions 18-139 (DEEWRAVLSP…NSVSLKFASA (122 aa)) constitute a MsrB domain. Zn(2+) contacts are provided by C57, C60, C103, and C106. Residues C75 and C128 are joined by a disulfide bond. The active-site Nucleophile is the C128.

Belongs to the MsrB Met sulfoxide reductase family. It depends on Zn(2+) as a cofactor.

Its subcellular location is the cytoplasm. It is found in the cytosol. It catalyses the reaction L-methionyl-[protein] + [thioredoxin]-disulfide + H2O = L-methionyl-(R)-S-oxide-[protein] + [thioredoxin]-dithiol. In terms of biological role, catalyzes the reduction of methionine sulfoxide (MetSO) to methionine in proteins. Plays a protective role against oxidative stress by restoring activity to proteins that have been inactivated by methionine oxidation. MSRB family specifically reduces the MetSO R-enantiomer. The protein is Peptide methionine sulfoxide reductase B8 (MSRB8) of Arabidopsis thaliana (Mouse-ear cress).